We begin with the raw amino-acid sequence, 463 residues long: Competence protein ComFA (463 aa).

Zn(2+) contacts are provided by C60, C63, C84, and C87. One can recognise a Helicase ATP-binding domain in the interval 133–285 (IEAISKKEEL…LNGQLHSVRI (153 aa)). An ATP-binding site is contributed by 146-153 (AVCGAGKT). The short motif at 233 to 236 (DEVD) is the DEAD box element. The Helicase C-terminal domain occupies 317-463 (AVKRWIEFHV…ELAAKVECTD (147 aa)).

Belongs to the DEAD box helicase family. In terms of assembly, monomer and dimer in solution. Interacts with DprA and ComFC; ComFA-ComFC form rings about 150 Angstroms in diameter with apparent 6-fold symmetry. Zn(2+) serves as cofactor.

It localises to the cytoplasm. Functionally, involved in transformation (genetic competence for DNA uptake). Required for DNA uptake but not for DNA binding to cells. DNA uptake is energy dependent, this protein may provide the driving force for DNA uptake. Does not have helicase activity, translocates on single-stranded (ss)DNA in a 5'-3' direction in an ATP-dependent manner, but does not unwind double-stranded (ds)DNA. ATP hydrolysis causes the release of ssDNA from ComFA. A ssDNA-stimulated ATPase; dsDNA does not stimulate ATPase. ATP hydrolysis causes the release of ssDNA from ComFA. Binds ssDNA but only very poorly to dsDNA in the absence of ATP. Binding to ssDNA does not require free DNA ends. The sequence is that of Competence protein ComFA from Bacillus subtilis (strain 168).